The primary structure comprises 86 residues: MASSLSLGSKILILLIRGYQLGISPLLGPRCRFNPTCSHYGIEALRRFGMIKGSWLTVKRILKCHPLHEGGDDPVPPRKNDDNREN.

Residues 66–86 (PLHEGGDDPVPPRKNDDNREN) are disordered.

The protein belongs to the UPF0161 family.

It localises to the cell inner membrane. In terms of biological role, could be involved in insertion of integral membrane proteins into the membrane. This Proteus mirabilis (strain HI4320) protein is Putative membrane protein insertion efficiency factor.